Reading from the N-terminus, the 171-residue chain is Disulfide bond formation protein B (171 aa).

At 1–13 (MSALTRFAQSRLA) the chain is on the cytoplasmic side. Residues 14–30 (WTLLLLTAVGLEACALF) form a helical membrane-spanning segment. The Periplasmic segment spans residues 31 to 48 (FQHVMKLDPCVMCIYQRL). Residues Cys40 and Cys43 are joined by a disulfide bond. The chain crosses the membrane as a helical span at residues 49–64 (AVLGVLTAGLIGVVGH). Residues 65 to 71 (QFRLLRF) are Cytoplasmic-facing. The helical transmembrane segment at 72-89 (LGVLLWGVSAAWGLKLAL) threads the bilayer. At 90 to 144 (ELVEMQTNPSPFSTCSFLPEFPEWMPLHEWFPSVFLPTGMCTDIPWEMFGITMSQ) the chain is on the periplasmic side. A disulfide bond links Cys104 and Cys130. A helical membrane pass occupies residues 145–163 (WMVVAFSTYLIALVVFIVP). Residues 164 to 171 (ALMPTKKA) are Cytoplasmic-facing.

It belongs to the DsbB family.

It localises to the cell inner membrane. In terms of biological role, required for disulfide bond formation in some periplasmic proteins. Acts by oxidizing the DsbA protein. This is Disulfide bond formation protein B from Shewanella loihica (strain ATCC BAA-1088 / PV-4).